Here is a 230-residue protein sequence, read N- to C-terminus: TPR repeat-containing protein BB_0298 (230 aa).

TPR repeat units lie at residues 69–102 (ARFF…NPNN) and 183–216 (FEFL…ASTE).

The polypeptide is TPR repeat-containing protein BB_0298 (Borreliella burgdorferi (strain ATCC 35210 / DSM 4680 / CIP 102532 / B31) (Borrelia burgdorferi)).